The following is a 126-amino-acid chain: Aspartate 1-decarboxylase (126 aa).

Serine 25 (schiff-base intermediate with substrate; via pyruvic acid) is an active-site residue. A Pyruvic acid (Ser) modification is found at serine 25. Residue threonine 57 participates in substrate binding. Residue tyrosine 58 is the Proton donor of the active site. 73–75 (GAA) is a binding site for substrate.

This sequence belongs to the PanD family. In terms of assembly, heterooctamer of four alpha and four beta subunits. Pyruvate is required as a cofactor. Post-translationally, is synthesized initially as an inactive proenzyme, which is activated by self-cleavage at a specific serine bond to produce a beta-subunit with a hydroxyl group at its C-terminus and an alpha-subunit with a pyruvoyl group at its N-terminus.

It is found in the cytoplasm. The catalysed reaction is L-aspartate + H(+) = beta-alanine + CO2. The protein operates within cofactor biosynthesis; (R)-pantothenate biosynthesis; beta-alanine from L-aspartate: step 1/1. Its function is as follows. Catalyzes the pyruvoyl-dependent decarboxylation of aspartate to produce beta-alanine. The polypeptide is Aspartate 1-decarboxylase (Saccharophagus degradans (strain 2-40 / ATCC 43961 / DSM 17024)).